A 311-amino-acid polypeptide reads, in one-letter code: Malate dehydrogenase (311 aa).

NAD(+)-binding positions include 7–13 (GAAGGIG) and Asp-34. Arg-81 and Arg-87 together coordinate substrate. Residues Asn-94 and 117-119 (ITN) each bind NAD(+). Substrate is bound by residues Asn-119 and Arg-153. His-177 acts as the Proton acceptor in catalysis. An NAD(+)-binding site is contributed by Met-227.

It belongs to the LDH/MDH superfamily. MDH type 1 family. As to quaternary structure, homodimer.

It catalyses the reaction (S)-malate + NAD(+) = oxaloacetate + NADH + H(+). Its function is as follows. Catalyzes the reversible oxidation of malate to oxaloacetate. In Histophilus somni (strain 2336) (Haemophilus somnus), this protein is Malate dehydrogenase.